Consider the following 350-residue polypeptide: CMP-N-acetylneuraminate-beta-galactosamide-alpha-2,3-sialyltransferase 2 (350 aa).

The Cytoplasmic segment spans residues 1 to 6; sequence MKCSLR. The helical; Signal-anchor for type II membrane protein transmembrane segment at 7–27 threads the bilayer; that stretch reads VWFLSMAFLLVFIMSLLFTYS. The Lumenal segment spans residues 28–350; that stretch reads HHSMATLPYL…ASKIEVYRGN (323 aa). 3 disulfide bridges follow: cysteine 70–cysteine 75, cysteine 72–cysteine 149, and cysteine 152–cysteine 291. Substrate contacts are provided by glutamine 116, asparagine 157, and asparagine 180. N-linked (GlcNAc...) asparagine glycosylation occurs at asparagine 211. Tyrosine 240, tyrosine 276, glycine 280, glycine 300, histidine 309, and histidine 326 together coordinate substrate.

The protein belongs to the glycosyltransferase 29 family. Homodimer; disulfide-linked. Homodimer formation occurs in the endoplasmic reticulum. In terms of processing, the soluble form derives from the membrane form by proteolytic processing. Post-translationally, N-glycosylated; necessary for proper exit from endoplasmic reticulum and trafficking to the Golgi apparatus.

The protein localises to the golgi apparatus. It is found in the golgi stack membrane. The protein resides in the secreted. It catalyses the reaction a beta-D-galactosyl-(1-&gt;3)-N-acetyl-alpha-D-galactosaminyl derivative + CMP-N-acetyl-beta-neuraminate = an N-acetyl-alpha-neuraminyl-(2-&gt;3)-beta-D-galactosyl-(1-&gt;3)-N-acetyl-alpha-D-galactosaminyl derivative + CMP + H(+). The catalysed reaction is a ganglioside GM1 (d18:1(4E)) + CMP-N-acetyl-beta-neuraminate = a ganglioside GD1a (d18:1(4E)) + CMP + H(+). The enzyme catalyses ganglioside GM1 (d18:1(4E)/18:0) + CMP-N-acetyl-beta-neuraminate = ganglioside GD1a (18:1(4E)/18:0) + CMP + H(+). It carries out the reaction a ganglioside GA1 + CMP-N-acetyl-beta-neuraminate = a ganglioside GM1b + CMP + H(+). It catalyses the reaction a ganglioside GA1 (d18:1(4E)) + CMP-N-acetyl-beta-neuraminate = a ganglioside GM1b (d18:1(4E)) + CMP + H(+). The catalysed reaction is a globoside GalGb4Cer + CMP-N-acetyl-beta-neuraminate = a globoside MSGG + CMP + H(+). The protein operates within protein modification; protein glycosylation. It participates in glycolipid biosynthesis. Its function is as follows. A beta-galactoside alpha2-3 sialyltransferase primarily involved in terminal sialylation of ganglio and globo series glycolipids. Catalyzes the transfer of sialic acid (N-acetyl-neuraminic acid; Neu5Ac) from the nucleotide sugar donor CMP-Neu5Ac onto acceptor Galbeta-(1-&gt;3)-GalNAc-terminated glycoconjugates through an alpha2-3 linkage. Sialylates GM1/GM1a, GA1/asialo-GM1 gangliosides to form GD1a and GM1b, respectively. Together with ST3GAL3, primarily responsible for biosynthesis of brain gangliosides that function as ligand for myelin-associated glycoprotein MAG on axons, regulating MAG expression and axonal myelin stability and regeneration. Responsible for the sialylation of the pluripotent stem cell- and cancer stem cell-associated antigen SSEA3, forming SSEA4. Sialylates with low efficiency asialofetuin, presumably onto O-glycosidically linked Galbeta-(1-&gt;3)-GalNAc-O-Ser. In Rattus norvegicus (Rat), this protein is CMP-N-acetylneuraminate-beta-galactosamide-alpha-2,3-sialyltransferase 2 (St3gal2).